A 483-amino-acid chain; its full sequence is GTPase Der (483 aa).

2 consecutive EngA-type G domains span residues 3 to 167 and 212 to 387; these read FTVA…GEER and LRIA…EIWN. GTP is bound by residues 9 to 16, 56 to 60, 119 to 122, 218 to 225, 265 to 269, and 330 to 333; these read GRPNVGKS, DTAGL, NKAE, GRPNAGKS, and NKWD. The KH-like domain occupies 388–472; sequence RRVSTGRLNR…PIRLSLRTSD (85 aa).

The protein belongs to the TRAFAC class TrmE-Era-EngA-EngB-Septin-like GTPase superfamily. EngA (Der) GTPase family. In terms of assembly, associates with the 50S ribosomal subunit.

In terms of biological role, GTPase that plays an essential role in the late steps of ribosome biogenesis. This chain is GTPase Der, found in Brucella anthropi (strain ATCC 49188 / DSM 6882 / CCUG 24695 / JCM 21032 / LMG 3331 / NBRC 15819 / NCTC 12168 / Alc 37) (Ochrobactrum anthropi).